Reading from the N-terminus, the 142-residue chain is uncharacterized protein (142 aa).

Belongs to the IIV-3 015R family.

This is an uncharacterized protein from Aedes vexans (Inland floodwater mosquito).